A 504-amino-acid polypeptide reads, in one-letter code: Deoxyguanosinetriphosphate triphosphohydrolase (504 aa).

In terms of domain architecture, HD spans 66–273 (RLTHSMEVQQ…MEAADDISYC (208 aa)).

It belongs to the dGTPase family. Type 1 subfamily. As to quaternary structure, homotetramer. Mg(2+) serves as cofactor.

The enzyme catalyses dGTP + H2O = 2'-deoxyguanosine + triphosphate + H(+). Functionally, dGTPase preferentially hydrolyzes dGTP over the other canonical NTPs. The protein is Deoxyguanosinetriphosphate triphosphohydrolase of Citrobacter koseri (strain ATCC BAA-895 / CDC 4225-83 / SGSC4696).